A 282-amino-acid polypeptide reads, in one-letter code: Aldo-keto reductase MT3049 (282 aa).

Residue tyrosine 57 is the Proton donor of the active site. Residues leucine 197, valine 235, arginine 237, serine 238, alanine 239, arginine 243, serine 246, asparagine 247, and arginine 273 each coordinate NADPH.

This sequence belongs to the aldo/keto reductase family.

This chain is Aldo-keto reductase MT3049, found in Mycobacterium tuberculosis (strain CDC 1551 / Oshkosh).